The primary structure comprises 487 residues: Bifunctional protein GlmU (487 aa).

Residues 1–232 (MAVIVLAAGA…AAELAGVNDR (232 aa)) form a pyrophosphorylase region. UDP-N-acetyl-alpha-D-glucosamine is bound by residues 6–9 (LAAG), K20, Q77, and 82–83 (GT). D107 is a Mg(2+) binding site. Positions 142, 157, 172, and 230 each coordinate UDP-N-acetyl-alpha-D-glucosamine. N230 provides a ligand contact to Mg(2+). Residues 233-253 (VQLAAAGAELNRRTVTAAMRG) form a linker region. The interval 254 to 487 (GATIVDPATT…PTSTPQADQE (234 aa)) is N-acetyltransferase. UDP-N-acetyl-alpha-D-glucosamine-binding residues include R335 and K353. The Proton acceptor role is filled by H365. Positions 368 and 379 each coordinate UDP-N-acetyl-alpha-D-glucosamine. Residues A382, 388–389 (NY), S407, and A425 each bind acetyl-CoA. Residues 453-487 (AKKRPGTPAAEAGEAAAKRVAEGGSPTSTPQADQE) are disordered. Residues 477–487 (SPTSTPQADQE) are compositionally biased toward polar residues.

In the N-terminal section; belongs to the N-acetylglucosamine-1-phosphate uridyltransferase family. This sequence in the C-terminal section; belongs to the transferase hexapeptide repeat family. As to quaternary structure, homotrimer. Requires Mg(2+) as cofactor.

The protein resides in the cytoplasm. The catalysed reaction is alpha-D-glucosamine 1-phosphate + acetyl-CoA = N-acetyl-alpha-D-glucosamine 1-phosphate + CoA + H(+). It catalyses the reaction N-acetyl-alpha-D-glucosamine 1-phosphate + UTP + H(+) = UDP-N-acetyl-alpha-D-glucosamine + diphosphate. It participates in nucleotide-sugar biosynthesis; UDP-N-acetyl-alpha-D-glucosamine biosynthesis; N-acetyl-alpha-D-glucosamine 1-phosphate from alpha-D-glucosamine 6-phosphate (route II): step 2/2. The protein operates within nucleotide-sugar biosynthesis; UDP-N-acetyl-alpha-D-glucosamine biosynthesis; UDP-N-acetyl-alpha-D-glucosamine from N-acetyl-alpha-D-glucosamine 1-phosphate: step 1/1. Its pathway is bacterial outer membrane biogenesis; LPS lipid A biosynthesis. Its function is as follows. Catalyzes the last two sequential reactions in the de novo biosynthetic pathway for UDP-N-acetylglucosamine (UDP-GlcNAc). The C-terminal domain catalyzes the transfer of acetyl group from acetyl coenzyme A to glucosamine-1-phosphate (GlcN-1-P) to produce N-acetylglucosamine-1-phosphate (GlcNAc-1-P), which is converted into UDP-GlcNAc by the transfer of uridine 5-monophosphate (from uridine 5-triphosphate), a reaction catalyzed by the N-terminal domain. The sequence is that of Bifunctional protein GlmU from Corynebacterium jeikeium (strain K411).